The chain runs to 876 residues: Alanine--tRNA ligase (876 aa).

Zn(2+) contacts are provided by His568, His572, Cys670, and His674.

It belongs to the class-II aminoacyl-tRNA synthetase family. Zn(2+) is required as a cofactor.

It is found in the cytoplasm. It carries out the reaction tRNA(Ala) + L-alanine + ATP = L-alanyl-tRNA(Ala) + AMP + diphosphate. Catalyzes the attachment of alanine to tRNA(Ala) in a two-step reaction: alanine is first activated by ATP to form Ala-AMP and then transferred to the acceptor end of tRNA(Ala). Also edits incorrectly charged Ser-tRNA(Ala) and Gly-tRNA(Ala) via its editing domain. The sequence is that of Alanine--tRNA ligase from Anaplasma phagocytophilum (strain HZ).